Here is a 379-residue protein sequence, read N- to C-terminus: Alcohol dehydrogenase 2 (379 aa).

Residues Cys47, Thr49, His69, Cys99, Cys102, Cys105, Cys113, and Cys177 each contribute to the Zn(2+) site. An alcohol is bound by residues Thr49 and His69. Residue Thr49 participates in NAD(+) binding. NAD(+) contacts are provided by residues 202 to 207 (GLGAVG), Asp226, Lys231, Thr272, Val295, 295 to 297 (VGV), Phe322, and Arg372.

Belongs to the zinc-containing alcohol dehydrogenase family. Homodimer. It depends on Zn(2+) as a cofactor.

The protein localises to the cytoplasm. It carries out the reaction a primary alcohol + NAD(+) = an aldehyde + NADH + H(+). The catalysed reaction is a secondary alcohol + NAD(+) = a ketone + NADH + H(+). The protein is Alcohol dehydrogenase 2 (ADH2) of Oryza sativa subsp. indica (Rice).